The following is a 241-amino-acid chain: tRNA pseudouridine synthase A (241 aa).

D52 functions as the Nucleophile in the catalytic mechanism. Residue Y111 participates in substrate binding.

This sequence belongs to the tRNA pseudouridine synthase TruA family. As to quaternary structure, homodimer.

It catalyses the reaction uridine(38/39/40) in tRNA = pseudouridine(38/39/40) in tRNA. In terms of biological role, formation of pseudouridine at positions 38, 39 and 40 in the anticodon stem and loop of transfer RNAs. This chain is tRNA pseudouridine synthase A, found in Ureaplasma urealyticum serovar 10 (strain ATCC 33699 / Western).